We begin with the raw amino-acid sequence, 157 residues long: SsrA-binding protein (157 aa).

Belongs to the SmpB family.

It is found in the cytoplasm. Required for rescue of stalled ribosomes mediated by trans-translation. Binds to transfer-messenger RNA (tmRNA), required for stable association of tmRNA with ribosomes. tmRNA and SmpB together mimic tRNA shape, replacing the anticodon stem-loop with SmpB. tmRNA is encoded by the ssrA gene; the 2 termini fold to resemble tRNA(Ala) and it encodes a 'tag peptide', a short internal open reading frame. During trans-translation Ala-aminoacylated tmRNA acts like a tRNA, entering the A-site of stalled ribosomes, displacing the stalled mRNA. The ribosome then switches to translate the ORF on the tmRNA; the nascent peptide is terminated with the 'tag peptide' encoded by the tmRNA and targeted for degradation. The ribosome is freed to recommence translation, which seems to be the essential function of trans-translation. In Chlorobium luteolum (strain DSM 273 / BCRC 81028 / 2530) (Pelodictyon luteolum), this protein is SsrA-binding protein.